The sequence spans 414 residues: Dihydroorotase (414 aa).

Zn(2+) contacts are provided by histidine 57 and histidine 59. Substrate-binding positions include 59 to 61 and asparagine 91; that span reads HLR. Residues lysine 135, histidine 164, histidine 204, and aspartate 272 each coordinate Zn(2+). An N6-carboxylysine modification is found at lysine 135. The active site involves aspartate 272. Substrate contacts are provided by residues histidine 276 and 286-287; that span reads AG.

The protein belongs to the metallo-dependent hydrolases superfamily. DHOase family. Class I DHOase subfamily. Zn(2+) serves as cofactor.

It carries out the reaction (S)-dihydroorotate + H2O = N-carbamoyl-L-aspartate + H(+). It participates in pyrimidine metabolism; UMP biosynthesis via de novo pathway; (S)-dihydroorotate from bicarbonate: step 3/3. Catalyzes the reversible cyclization of carbamoyl aspartate to dihydroorotate. The chain is Dihydroorotase from Pyrococcus furiosus (strain ATCC 43587 / DSM 3638 / JCM 8422 / Vc1).